The following is a 303-amino-acid chain: Probable aspartoacylase (303 aa).

Residues histidine 13 and glutamate 16 each contribute to the Zn(2+) site. Residues arginine 55 and asparagine 62–arginine 63 contribute to the substrate site. A Zn(2+)-binding site is contributed by histidine 104. 2 residues coordinate substrate: glutamate 162 and tyrosine 273.

The protein belongs to the AspA/AstE family. Aspartoacylase subfamily. Zn(2+) is required as a cofactor.

The enzyme catalyses an N-acyl-L-aspartate + H2O = a carboxylate + L-aspartate. This Parasynechococcus marenigrum (strain WH8102) protein is Probable aspartoacylase.